A 242-amino-acid chain; its full sequence is Probable transcriptional regulatory protein Bamb_2332 (242 aa).

This sequence belongs to the TACO1 family.

The protein resides in the cytoplasm. The sequence is that of Probable transcriptional regulatory protein Bamb_2332 from Burkholderia ambifaria (strain ATCC BAA-244 / DSM 16087 / CCUG 44356 / LMG 19182 / AMMD) (Burkholderia cepacia (strain AMMD)).